The following is a 426-amino-acid chain: 4-aminobutyrate aminotransferase GabT (426 aa).

Pyridoxal 5'-phosphate contacts are provided by residues 111-112 (GS) and Q242. An N6-(pyridoxal phosphate)lysine modification is found at K268. T297 serves as a coordination point for pyridoxal 5'-phosphate.

This sequence belongs to the class-III pyridoxal-phosphate-dependent aminotransferase family. As to quaternary structure, homotetramer. Pyridoxal 5'-phosphate serves as cofactor.

The catalysed reaction is 4-aminobutanoate + 2-oxoglutarate = succinate semialdehyde + L-glutamate. It catalyses the reaction 5-aminopentanoate + 2-oxoglutarate = 5-oxopentanoate + L-glutamate. It functions in the pathway amino-acid degradation; 4-aminobutanoate degradation. It participates in amino-acid degradation. Pyridoxal phosphate-dependent enzyme that catalyzes transamination between primary amines and alpha-keto acids. Catalyzes the transfer of the amino group from gamma-aminobutyrate (GABA) to alpha-ketoglutarate (KG) to yield succinic semialdehyde (SSA) and glutamate. Thereby functions in a GABA degradation pathway that allows some E.coli strains to utilize GABA as a nitrogen source for growth. Also catalyzes the conversion of 5-aminovalerate to glutarate semialdehyde, as part of a L-lysine degradation pathway that proceeds via cadaverine, glutarate and L-2-hydroxyglutarate. This chain is 4-aminobutyrate aminotransferase GabT (gabT), found in Escherichia coli (strain K12).